The sequence spans 578 residues: Adenine deaminase (578 aa).

This sequence belongs to the metallo-dependent hydrolases superfamily. Adenine deaminase family. Mn(2+) is required as a cofactor.

It catalyses the reaction adenine + H2O + H(+) = hypoxanthine + NH4(+). The protein is Adenine deaminase of Ligilactobacillus salivarius (strain UCC118) (Lactobacillus salivarius).